The sequence spans 385 residues: Probable tRNA sulfurtransferase (385 aa).

Residues 57–160 (DGVIERVKKV…RGNAYVFTDK (104 aa)) form the THUMP domain. ATP-binding positions include 180-181 (ML), 205-206 (YY), R262, G284, and Q293.

Belongs to the ThiI family.

It localises to the cytoplasm. It carries out the reaction [ThiI sulfur-carrier protein]-S-sulfanyl-L-cysteine + a uridine in tRNA + 2 reduced [2Fe-2S]-[ferredoxin] + ATP + H(+) = [ThiI sulfur-carrier protein]-L-cysteine + a 4-thiouridine in tRNA + 2 oxidized [2Fe-2S]-[ferredoxin] + AMP + diphosphate. It catalyses the reaction [ThiS sulfur-carrier protein]-C-terminal Gly-Gly-AMP + S-sulfanyl-L-cysteinyl-[cysteine desulfurase] + AH2 = [ThiS sulfur-carrier protein]-C-terminal-Gly-aminoethanethioate + L-cysteinyl-[cysteine desulfurase] + A + AMP + 2 H(+). It functions in the pathway cofactor biosynthesis; thiamine diphosphate biosynthesis. In terms of biological role, catalyzes the ATP-dependent transfer of a sulfur to tRNA to produce 4-thiouridine in position 8 of tRNAs, which functions as a near-UV photosensor. Also catalyzes the transfer of sulfur to the sulfur carrier protein ThiS, forming ThiS-thiocarboxylate. This is a step in the synthesis of thiazole, in the thiamine biosynthesis pathway. The sulfur is donated as persulfide by IscS. This chain is Probable tRNA sulfurtransferase, found in Clostridium perfringens (strain 13 / Type A).